The following is a 393-amino-acid chain: Isocitrate dehydrogenase [NADP] (393 aa).

The D-threo-isocitrate site is built by Ser-102, Asn-104, Arg-108, Arg-118, and Arg-142. Residue Asp-283 participates in Mg(2+) binding.

It belongs to the isocitrate and isopropylmalate dehydrogenases family. Homodimer. Requires Mg(2+) as cofactor. Mn(2+) serves as cofactor.

The catalysed reaction is D-threo-isocitrate + NADP(+) = 2-oxoglutarate + CO2 + NADPH. In terms of biological role, catalyzes the oxidative decarboxylation of isocitrate to 2-oxoglutarate and carbon dioxide with the concomitant reduction of NADP(+). This is Isocitrate dehydrogenase [NADP] (icd) from Streptococcus mutans serotype c (strain ATCC 700610 / UA159).